Here is a 512-residue protein sequence, read N- to C-terminus: Glutamyl-tRNA(Gln) amidotransferase subunit A (512 aa).

Catalysis depends on charge relay system residues lysine 82 and serine 157. The active-site Acyl-ester intermediate is serine 181.

It belongs to the amidase family. GatA subfamily. In terms of assembly, heterotrimer of A, B and C subunits.

It carries out the reaction L-glutamyl-tRNA(Gln) + L-glutamine + ATP + H2O = L-glutaminyl-tRNA(Gln) + L-glutamate + ADP + phosphate + H(+). Allows the formation of correctly charged Gln-tRNA(Gln) through the transamidation of misacylated Glu-tRNA(Gln) in organisms which lack glutaminyl-tRNA synthetase. The reaction takes place in the presence of glutamine and ATP through an activated gamma-phospho-Glu-tRNA(Gln). The protein is Glutamyl-tRNA(Gln) amidotransferase subunit A of Bordetella bronchiseptica (strain ATCC BAA-588 / NCTC 13252 / RB50) (Alcaligenes bronchisepticus).